A 43-amino-acid chain; its full sequence is Protein PsbN (43 aa).

Residues threonine 5–valine 25 traverse the membrane as a helical segment.

The protein belongs to the PsbN family.

The protein localises to the plastid. The protein resides in the chloroplast thylakoid membrane. Functionally, may play a role in photosystem I and II biogenesis. This chain is Protein PsbN, found in Cyanidioschyzon merolae (strain NIES-3377 / 10D) (Unicellular red alga).